Consider the following 473-residue polypeptide: Photosystem II CP43 reaction center protein (473 aa).

A propeptide spanning residues 1 to 14 (MKTLYSLRRFYPVE) is cleaved from the precursor. N-acetylthreonine is present on Thr-15. Phosphothreonine is present on Thr-15. Helical transmembrane passes span 69 to 93 (LFEVAHFVPEKPMYEQGLILLPHLA), 134 to 155 (LLGPETLEESFPFFGYVWKDRN), 178 to 200 (KALYFGGVYDTWAPGGGDVRKIT), 255 to 275 (KPFAWARRALVWSGEAYLSYS), and 291 to 312 (WFNNTAYPSEFYGPTGPEASQA). [CaMn4O5] cluster is bound at residue Glu-367. The helical transmembrane segment at 447–471 (RARAAAAGFEKGIDRDFEPVLFMTP) threads the bilayer.

The protein belongs to the PsbB/PsbC family. PsbC subfamily. As to quaternary structure, PSII is composed of 1 copy each of membrane proteins PsbA, PsbB, PsbC, PsbD, PsbE, PsbF, PsbH, PsbI, PsbJ, PsbK, PsbL, PsbM, PsbT, PsbX, PsbY, PsbZ, Psb30/Ycf12, at least 3 peripheral proteins of the oxygen-evolving complex and a large number of cofactors. It forms dimeric complexes. It depends on Binds multiple chlorophylls and provides some of the ligands for the Ca-4Mn-5O cluster of the oxygen-evolving complex. It may also provide a ligand for a Cl- that is required for oxygen evolution. PSII binds additional chlorophylls, carotenoids and specific lipids. as a cofactor.

The protein resides in the plastid. Its subcellular location is the chloroplast thylakoid membrane. Its function is as follows. One of the components of the core complex of photosystem II (PSII). It binds chlorophyll and helps catalyze the primary light-induced photochemical processes of PSII. PSII is a light-driven water:plastoquinone oxidoreductase, using light energy to abstract electrons from H(2)O, generating O(2) and a proton gradient subsequently used for ATP formation. The protein is Photosystem II CP43 reaction center protein of Cucumis sativus (Cucumber).